The primary structure comprises 440 residues: Argininosuccinate lyase (440 aa).

It belongs to the lyase 1 family. Argininosuccinate lyase subfamily.

The protein resides in the cytoplasm. The catalysed reaction is 2-(N(omega)-L-arginino)succinate = fumarate + L-arginine. It participates in amino-acid biosynthesis; L-arginine biosynthesis; L-arginine from L-ornithine and carbamoyl phosphate: step 3/3. In Clostridium botulinum (strain 657 / Type Ba4), this protein is Argininosuccinate lyase.